A 172-amino-acid polypeptide reads, in one-letter code: Putative F-box protein At3g13825 (172 aa).

The F-box domain maps to 1–51 (MTTLSNLSVDLVGEIFSRVPLISLSEVRCTCTTWNTLSWNILSENYVFGKA).

In Arabidopsis thaliana (Mouse-ear cress), this protein is Putative F-box protein At3g13825.